The primary structure comprises 316 residues: MNQNTQPTNNLKDKKITYNFNKLQKRLRRNVGNAIANFNMIEAGDKVMVCLSGGKDSYTLLDILLNLKLSAPINFDIVAVNLDQKQPGFPEHILPEYLASIGVEYKIVQENTYGIVKEKIPEGKTTCSLCSRLRRGILYRTATELGATKIALGHHRDDMLETLFLNMFYNGKLKSMPPKLISDDAKHIVIRPLAYCKEKDIEKYAEAKQFPIIPCNLCGSQPNLQRQVVKEMLQNWDRQYPGRIETMFSALQNVTPSHLCDTQLFNFKAVKHGEMINGIEGDIAFDKMDIPMTLNIQEEDEKQAYTQNGTIQFKAV.

Positions 52–57 (SGGKDS) match the PP-loop motif motif. Residues C127, C130, and C218 each contribute to the [4Fe-4S] cluster site.

It belongs to the TtcA family. Homodimer. Mg(2+) serves as cofactor. Requires [4Fe-4S] cluster as cofactor.

It is found in the cytoplasm. It carries out the reaction cytidine(32) in tRNA + S-sulfanyl-L-cysteinyl-[cysteine desulfurase] + AH2 + ATP = 2-thiocytidine(32) in tRNA + L-cysteinyl-[cysteine desulfurase] + A + AMP + diphosphate + H(+). It functions in the pathway tRNA modification. Functionally, catalyzes the ATP-dependent 2-thiolation of cytidine in position 32 of tRNA, to form 2-thiocytidine (s(2)C32). The sulfur atoms are provided by the cysteine/cysteine desulfurase (IscS) system. This is tRNA-cytidine(32) 2-sulfurtransferase from Haemophilus ducreyi (strain 35000HP / ATCC 700724).